The sequence spans 60 residues: Beta-defensin 8 (60 aa).

Positions 1–22 (MRIHYLLFTFLLVLLSPLAAFS) are cleaved as a signal peptide. The propeptide occupies 23–25 (QKI). Intrachain disulfides connect cysteine 31/cysteine 58, cysteine 38/cysteine 52, and cysteine 42/cysteine 59.

It belongs to the beta-defensin family. Most highly expressed in testis and heart.

The protein localises to the secreted. Its function is as follows. A synthetic peptide displays antimicrobial activities against S.aureus, P.aeruginosa, E.coli and B.cepacia. The antimicrobial activity against S.aureus, E.coli and B.cepacia is reduced in raised concentration of NaCl, but its action against P.aeruginosa is independent of NaCl concentration. This chain is Beta-defensin 8 (Defb8), found in Mus musculus (Mouse).